A 428-amino-acid chain; its full sequence is Glutamate-1-semialdehyde 2,1-aminomutase (428 aa).

Lys-265 carries the post-translational modification N6-(pyridoxal phosphate)lysine.

This sequence belongs to the class-III pyridoxal-phosphate-dependent aminotransferase family. HemL subfamily. As to quaternary structure, homodimer. Pyridoxal 5'-phosphate serves as cofactor.

The protein resides in the cytoplasm. The enzyme catalyses (S)-4-amino-5-oxopentanoate = 5-aminolevulinate. Its pathway is porphyrin-containing compound metabolism; protoporphyrin-IX biosynthesis; 5-aminolevulinate from L-glutamyl-tRNA(Glu): step 2/2. The protein is Glutamate-1-semialdehyde 2,1-aminomutase of Thioalkalivibrio sulfidiphilus (strain HL-EbGR7).